A 394-amino-acid polypeptide reads, in one-letter code: Elongation factor Tu (394 aa).

The region spanning lysine 10 to glutamate 204 is the tr-type G domain. Positions glycine 19–threonine 26 are G1. GTP is bound at residue glycine 19–threonine 26. Threonine 26 is a Mg(2+) binding site. A G2 region spans residues glycine 60–asparagine 64. Residues aspartate 81–glycine 84 form a G3 region. Residues aspartate 81–histidine 85 and asparagine 136–aspartate 139 each bind GTP. The G4 stretch occupies residues asparagine 136–aspartate 139. The G5 stretch occupies residues serine 174–leucine 176.

Belongs to the TRAFAC class translation factor GTPase superfamily. Classic translation factor GTPase family. EF-Tu/EF-1A subfamily. As to quaternary structure, monomer.

The protein resides in the cytoplasm. The catalysed reaction is GTP + H2O = GDP + phosphate + H(+). Its function is as follows. GTP hydrolase that promotes the GTP-dependent binding of aminoacyl-tRNA to the A-site of ribosomes during protein biosynthesis. This chain is Elongation factor Tu, found in Shewanella amazonensis (strain ATCC BAA-1098 / SB2B).